A 379-amino-acid polypeptide reads, in one-letter code: ATP-sensitive inward rectifier potassium channel 10 (379 aa).

Residues 1–61 are Cytoplasmic-facing; sequence MTSVAKVYYS…LKDLWTTFID (61 aa). Residue Arg-36 coordinates 1,2-dioctanoyl-sn-glycero-3-phospho-(1D-myo-inositol-4,5-bisphosphate). A helical transmembrane segment spans residues 62-88; it reads MQWRYKLLLFSATFAGTWFLFGVVWYL. Topologically, residues 89–114 are extracellular; sequence VAVAHGDLLELGPPANHTPCVVQVHT. Cys-108 and Cys-140 are disulfide-bonded. Residues 115–131 constitute an intramembrane region (discontinuously helical; Pore-forming); that stretch reads LTGAFLFSLESQTTIGY. Residues 128–133 carry the Selectivity filter motif; sequence TIGYGF. At 132–140 the chain is on the extracellular side; it reads GFRYISEEC. Residues 141-166 traverse the membrane as a helical segment; that stretch reads PLAIVLLIAQLVLTTILEIFITGTFL. At 167–379 the chain is on the cytoplasmic side; it reads AKIARPKKRA…SALSVRISNV (213 aa). 1,2-dioctanoyl-sn-glycero-3-phospho-(1D-myo-inositol-4,5-bisphosphate) contacts are provided by Lys-168, Arg-171, and Lys-173. 210 to 217 serves as a coordination point for ATP; sequence GCQVTGKL.

Belongs to the inward rectifier-type potassium channel (TC 1.A.2.1) family. KCNJ10 subfamily. In terms of assembly, homotetramer. In kidney cells, it forms heteromeric channels with Kir5.1/KCNJ16; this interaction is required for KCNJ16 localization to the basolateral membrane. Interacts with MAGI1, alone and possibly as a heteromer with KCNJ16; this interaction may facilitate KCNJ10/KCNJ16 potassium channel expression at the basolateral membrane in kidney cells. Interacts with PATJ. As to expression, widely expressed in adult brain, including in the neocortex, the stratum pyrimadale of the hippocampus and the piriform cortex. Expressed by cultured astrocytes and also by cocultured cortical neurons (at protein level). In the distal segment of the nephron, expressed in the distal convoluted tubule, the connecting tubule, and the early cortical collecting duct.

It localises to the membrane. It is found in the basolateral cell membrane. The enzyme catalyses K(+)(in) = K(+)(out). Its activity is regulated as follows. Channel activity is strongly regulated by variations of cytosolic pH; channels are activated by alkaline and inhibited by acidic pH values. Activated by phosphatidylinositol 4,5 biphosphate (PtdIns(4,5)P2). Inhibited by Ba(2+) and Cs(+). May be responsible for potassium buffering action of glial cells in the brain. Inward rectifier potassium channels are characterized by a greater tendency to allow potassium to flow into the cell rather than out of it. Their voltage dependence is regulated by the concentration of extracellular potassium; as external potassium is raised, the voltage range of the channel opening shifts to more positive voltages. The inward rectification is mainly due to the blockage of outward current by internal magnesium. Can be blocked by extracellular barium and cesium. In the kidney, together with KCNJ16, mediates basolateral K(+) recycling in distal tubules; this process is critical for Na(+) reabsorption at the tubules. The chain is ATP-sensitive inward rectifier potassium channel 10 from Mus musculus (Mouse).